The sequence spans 398 residues: Phosphoglycerate kinase (398 aa).

Substrate-binding positions include 21–23 (DFN), R41, 64–67 (HLGR), R123, and R156. Residues K207, G294, E325, and 354-357 (GGDS) contribute to the ATP site.

The protein belongs to the phosphoglycerate kinase family. As to quaternary structure, monomer.

Its subcellular location is the cytoplasm. It catalyses the reaction (2R)-3-phosphoglycerate + ATP = (2R)-3-phospho-glyceroyl phosphate + ADP. It participates in carbohydrate degradation; glycolysis; pyruvate from D-glyceraldehyde 3-phosphate: step 2/5. In Salinibacter ruber (strain DSM 13855 / M31), this protein is Phosphoglycerate kinase.